The sequence spans 588 residues: 2-isopropylmalate synthase (588 aa).

A Pyruvate carboxyltransferase domain is found at 40–314 (PRWCAVDLRD…DPQIDFSDLD (275 aa)). Positions 49, 253, 255, and 289 each coordinate Mg(2+). The interval 456-588 (APLDRVEEKW…TVREPELAAV (133 aa)) is regulatory domain.

Belongs to the alpha-IPM synthase/homocitrate synthase family. LeuA type 2 subfamily. As to quaternary structure, homodimer. Mg(2+) is required as a cofactor.

It localises to the cytoplasm. The enzyme catalyses 3-methyl-2-oxobutanoate + acetyl-CoA + H2O = (2S)-2-isopropylmalate + CoA + H(+). It functions in the pathway amino-acid biosynthesis; L-leucine biosynthesis; L-leucine from 3-methyl-2-oxobutanoate: step 1/4. In terms of biological role, catalyzes the condensation of the acetyl group of acetyl-CoA with 3-methyl-2-oxobutanoate (2-ketoisovalerate) to form 3-carboxy-3-hydroxy-4-methylpentanoate (2-isopropylmalate). The chain is 2-isopropylmalate synthase from Clavibacter sepedonicus (Clavibacter michiganensis subsp. sepedonicus).